We begin with the raw amino-acid sequence, 370 residues long: Peptidoglycan glycosyltransferase MrdB (370 aa).

Helical transmembrane passes span 20–40 (MLLILLALLVYSALVIWSASG), 50–70 (IGQIAMGLVIMVVMAQIPPRV), 75–95 (APYLYIICIILLVAVDAFGAI), 136–156 (SLKNTGIALVLIFMPTLLVAA), 160–180 (LGTSILVALSGLFVLFLSGLS), 183–203 (LIGVAVVLVAAFIPILWFFLM), 263–283 (FIFAVLAEELGLVGILILLAL), 312–332 (LILFVYVFVNIGMVSGILPVV), and 336–356 (LPLVSYGGSALIVLMAGFGIV).

The protein belongs to the SEDS family. MrdB/RodA subfamily.

Its subcellular location is the cell inner membrane. The catalysed reaction is [GlcNAc-(1-&gt;4)-Mur2Ac(oyl-L-Ala-gamma-D-Glu-L-Lys-D-Ala-D-Ala)](n)-di-trans,octa-cis-undecaprenyl diphosphate + beta-D-GlcNAc-(1-&gt;4)-Mur2Ac(oyl-L-Ala-gamma-D-Glu-L-Lys-D-Ala-D-Ala)-di-trans,octa-cis-undecaprenyl diphosphate = [GlcNAc-(1-&gt;4)-Mur2Ac(oyl-L-Ala-gamma-D-Glu-L-Lys-D-Ala-D-Ala)](n+1)-di-trans,octa-cis-undecaprenyl diphosphate + di-trans,octa-cis-undecaprenyl diphosphate + H(+). The protein operates within cell wall biogenesis; peptidoglycan biosynthesis. In terms of biological role, peptidoglycan polymerase that is essential for cell wall elongation. This chain is Peptidoglycan glycosyltransferase MrdB, found in Escherichia coli O157:H7.